Reading from the N-terminus, the 514-residue chain is Cytochrome P450 monooxygenase nodJ (514 aa).

Residues 2 to 24 (ELIVIIITLAFCILLYGTRWRAA) form a helical membrane-spanning segment. 3 N-linked (GlcNAc...) asparagine glycosylation sites follow: asparagine 144, asparagine 245, and asparagine 416. Cysteine 432 serves as a coordination point for heme.

Belongs to the cytochrome P450 family. Heme serves as cofactor.

It is found in the membrane. The protein operates within secondary metabolite biosynthesis. Cytochrome P450 monooxygenase; part of the gene cluster that mediates the biosynthesis of the indole diterpenes nodulisporic acids (NA). Nodulisporic acid A (NAA) and its chemically modified derivatives are of particular significance because of their highly potent insecticidal activity against blood-feeding arthropods and lack of observable adverse effects on mammals, in particular the tremogenicity associated with the paspaline-derived IDTs is not observed. The geranylgeranyl diphosphate (GGPP) synthase ggs1, localized outside of the cluster, is proposed to catalyze the first step in nodulisporic acid biosynthesis via conversion of farnesyl pyrophosphate and isopentyl pyrophosphate into geranylgeranyl pyrophosphate (GGPP). Condensation of indole-3-glycerol phosphate with GGPP by the prenyl transferase nodC then forms 3-geranylgeranylindole (3-GGI). Epoxidation by the FAD-dependent monooxygenase nodM leads to a single-epoxidized-GGI that is substrate of the terpene cyclase nodB for cyclization to yield emindole SB. The terminal methyl carbon, C28, of emindole SB is then oxidized by the cytochrome P450 monooxygenase nodW to produce nodulisporic acid F (NAF), the pentacyclic core of NAA. NAF is converted to nodulisporic acid E (NAE) via prenylation. This step is probably performed by one of the indole diterpene prenyltransferases nodD1 or nodD2. Several oxidation steps performed by the FAD-linked oxidoreductase nodO and one of the cytochrome P450 monooxygenase nodR, nodX or nodZ further convert NAE to nodulisporic acid D (NAD). NAD is substrate of cytochrome P450 monooxygenase nodJ to produce the precursor of nodulisporic acid C (NAC), converted to NAC by one of the indole diterpene prenyltransferases nodD1 or nodD2. The FAD-dependent monooxygenase nodY2 then oxidizes NAC to nodulisporic acid B (NAB). Finally NAB is converted to NAA by one of the cytochrome P450 monooxygenases nodR, nodX or nodZ. The sequence is that of Cytochrome P450 monooxygenase nodJ from Hypoxylon pulicicidum.